The following is a 203-amino-acid chain: Small ribosomal subunit protein uS4 (203 aa).

The region spanning 93-154 is the S4 RNA-binding domain; that stretch reads RRFDNVVYRC…KSRNLDAVAD (62 aa).

The protein belongs to the universal ribosomal protein uS4 family. In terms of assembly, part of the 30S ribosomal subunit. Contacts protein S5. The interaction surface between S4 and S5 is involved in control of translational fidelity.

Functionally, one of the primary rRNA binding proteins, it binds directly to 16S rRNA where it nucleates assembly of the body of the 30S subunit. In terms of biological role, with S5 and S12 plays an important role in translational accuracy. The chain is Small ribosomal subunit protein uS4 from Chlorobaculum parvum (strain DSM 263 / NCIMB 8327) (Chlorobium vibrioforme subsp. thiosulfatophilum).